Consider the following 209-residue polypeptide: Ras-related protein Rab-2-A (209 aa).

Position 13–21 (13–21 (GDTGVGKSC)) interacts with GTP. Residues 35 to 43 (HDLTIGVEF) carry the Effector region motif. Residues 61–65 (DTAGQ), 119–122 (NKCD), and 149–151 (SAK) each bind GTP. Residues Cys207 and Cys208 are each lipidated (S-geranylgeranyl cysteine).

Belongs to the small GTPase superfamily. Rab family.

Its subcellular location is the endoplasmic reticulum membrane. The protein resides in the golgi apparatus membrane. Functionally, protein transport. Probably involved in vesicular traffic. This Zea mays (Maize) protein is Ras-related protein Rab-2-A (RAB2A).